A 502-amino-acid polypeptide reads, in one-letter code: Glutamate--tRNA ligase (502 aa).

Residues 9-19 (PSPTGFPHVGT) carry the 'HIGH' region motif. A 'KMSKS' region motif is present at residues 250–254 (KLSKR). Lys253 contributes to the ATP binding site.

The protein belongs to the class-I aminoacyl-tRNA synthetase family. Glutamate--tRNA ligase type 1 subfamily. As to quaternary structure, monomer.

Its subcellular location is the cytoplasm. The catalysed reaction is tRNA(Glu) + L-glutamate + ATP = L-glutamyl-tRNA(Glu) + AMP + diphosphate. Catalyzes the attachment of glutamate to tRNA(Glu) in a two-step reaction: glutamate is first activated by ATP to form Glu-AMP and then transferred to the acceptor end of tRNA(Glu). This is Glutamate--tRNA ligase from Acinetobacter baylyi (strain ATCC 33305 / BD413 / ADP1).